The following is a 618-amino-acid chain: Glucose starvation modulator protein 1 (618 aa).

Positions 20–48 (CEFCHTKHIQCDVGRPCQNCLKRNIGKFC) form a DNA-binding region, zn(2)-C6 fungal-type. Residues 325 to 352 (ANANTHPSHNAKLESECDSSSHSDADLE) form a disordered region. Basic and acidic residues predominate over residues 335 to 352 (AKLESECDSSSHSDADLE). The 73-residue stretch at 466–538 (LLDLENMAKL…QIFNELLAFG (73 aa)) folds into the PAS domain.

This sequence belongs to the ERT1/acuK family.

The protein resides in the nucleus. In terms of biological role, transcription factor which regulates nonfermentable carbon utilization. Binds specifically to 5'-CGGN(8)CGG-3' and 5'-CGGN(9)CGG-3' sequences in the promoter region. The protein is Glucose starvation modulator protein 1 (GSM1) of Saccharomyces cerevisiae (strain YJM789) (Baker's yeast).